A 323-amino-acid chain; its full sequence is Mycothiol acetyltransferase (323 aa).

N-acetyltransferase domains follow at residues 5-145 and 168-323; these read LTTD…LPLR and VEIR…PEER. Residue Glu-36 participates in 1D-myo-inositol 2-(L-cysteinylamino)-2-deoxy-alpha-D-glucopyranoside binding. Acetyl-CoA is bound at residue 83–85; sequence VAV. The 1D-myo-inositol 2-(L-cysteinylamino)-2-deoxy-alpha-D-glucopyranoside site is built by Glu-195, Lys-236, and Glu-252. Acetyl-CoA contacts are provided by residues 256 to 258 and 263 to 269; these read VGV and QGSGLGR. A 1D-myo-inositol 2-(L-cysteinylamino)-2-deoxy-alpha-D-glucopyranoside-binding site is contributed by Tyr-290. 295–300 provides a ligand contact to acetyl-CoA; it reads NRPAVQ.

It belongs to the acetyltransferase family. MshD subfamily. As to quaternary structure, monomer.

The enzyme catalyses 1D-myo-inositol 2-(L-cysteinylamino)-2-deoxy-alpha-D-glucopyranoside + acetyl-CoA = mycothiol + CoA + H(+). In terms of biological role, catalyzes the transfer of acetyl from acetyl-CoA to desacetylmycothiol (Cys-GlcN-Ins) to form mycothiol. The protein is Mycothiol acetyltransferase of Thermobifida fusca (strain YX).